The chain runs to 253 residues: 5'-nucleotidase SurE (253 aa).

Residues Asp8, Asp9, Ser39, and Asn95 each coordinate a divalent metal cation.

The protein belongs to the SurE nucleotidase family. A divalent metal cation serves as cofactor.

It localises to the cytoplasm. The enzyme catalyses a ribonucleoside 5'-phosphate + H2O = a ribonucleoside + phosphate. Functionally, nucleotidase that shows phosphatase activity on nucleoside 5'-monophosphates. The protein is 5'-nucleotidase SurE of Desulfatibacillum aliphaticivorans.